The chain runs to 251 residues: Flap endonuclease Xni (251 aa).

Residue aspartate 104 participates in Mg(2+) binding. In terms of domain architecture, 5'-3' exonuclease spans 160–249 (VLPRQLPDYW…IDGNLQQLRL (90 aa)). Positions 171, 172, 180, 182, and 185 each coordinate K(+). An interaction with DNA region spans residues 184 to 189 (GIGPKS).

Belongs to the Xni family. It depends on Mg(2+) as a cofactor. K(+) is required as a cofactor.

Has flap endonuclease activity. During DNA replication, flap endonucleases cleave the 5'-overhanging flap structure that is generated by displacement synthesis when DNA polymerase encounters the 5'-end of a downstream Okazaki fragment. The sequence is that of Flap endonuclease Xni from Salmonella schwarzengrund (strain CVM19633).